The sequence spans 383 residues: Succinyl-diaminopimelate desuccinylase (383 aa).

Residue H70 participates in Zn(2+) binding. Residue D72 is part of the active site. D103 serves as a coordination point for Zn(2+). The active-site Proton acceptor is the E137. The Zn(2+) site is built by E138, E166, and H352.

This sequence belongs to the peptidase M20A family. DapE subfamily. As to quaternary structure, homodimer. Requires Zn(2+) as cofactor. Co(2+) serves as cofactor.

The enzyme catalyses N-succinyl-(2S,6S)-2,6-diaminopimelate + H2O = (2S,6S)-2,6-diaminopimelate + succinate. It participates in amino-acid biosynthesis; L-lysine biosynthesis via DAP pathway; LL-2,6-diaminopimelate from (S)-tetrahydrodipicolinate (succinylase route): step 3/3. Catalyzes the hydrolysis of N-succinyl-L,L-diaminopimelic acid (SDAP), forming succinate and LL-2,6-diaminopimelate (DAP), an intermediate involved in the bacterial biosynthesis of lysine and meso-diaminopimelic acid, an essential component of bacterial cell walls. This Hahella chejuensis (strain KCTC 2396) protein is Succinyl-diaminopimelate desuccinylase.